Here is a 74-residue protein sequence, read N- to C-terminus: Large ribosomal subunit protein bL28 (74 aa).

It belongs to the bacterial ribosomal protein bL28 family.

The chain is Large ribosomal subunit protein bL28 from Desulforapulum autotrophicum (strain ATCC 43914 / DSM 3382 / VKM B-1955 / HRM2) (Desulfobacterium autotrophicum).